We begin with the raw amino-acid sequence, 150 residues long: Clitocypin (150 aa).

It belongs to the protease inhibitor I48 family. As to quaternary structure, homodimer. Uniformly expressed throughout the mature fruiting body (at mRNA and protein level).

Its function is as follows. Binds and inhibits cysteine proteinases. Inhibits most strongly papain and cathepsin L, more weakly bromelain and cathepsin B while it is completely ineffective against cathepsin H. This is Clitocypin (Cnc1) from Clitocybe nebularis (Clouded agaric).